A 75-amino-acid polypeptide reads, in one-letter code: Tautomerase PptA (75 aa).

Catalysis depends on proline 2, which acts as the Proton acceptor; via imino nitrogen.

It belongs to the 4-oxalocrotonate tautomerase family. PptA subfamily. Homodimer.

The protein localises to the cytoplasm. This Escherichia coli O127:H6 (strain E2348/69 / EPEC) protein is Tautomerase PptA.